A 324-amino-acid chain; its full sequence is DNA repair and recombination protein RadA (324 aa).

114–121 (GEFGSGKT) provides a ligand contact to ATP.

It belongs to the eukaryotic RecA-like protein family.

In terms of biological role, involved in DNA repair and in homologous recombination. Binds and assemble on single-stranded DNA to form a nucleoprotein filament. Hydrolyzes ATP in a ssDNA-dependent manner and promotes DNA strand exchange between homologous DNA molecules. This Sulfurisphaera tokodaii (strain DSM 16993 / JCM 10545 / NBRC 100140 / 7) (Sulfolobus tokodaii) protein is DNA repair and recombination protein RadA.